A 186-amino-acid polypeptide reads, in one-letter code: MKKIFDTTFTIKEVVATGIGAALFVVIGMVSIPTPVPNTSIQLQYAVQALFGVVFGPIVGFLTGFIGHALKDSIQYGNPWWTWVLASGLFGLVVGLLKNYLRVAQGVFESRDIITFNVAQFVANALVWVVIAPLGDILIYNEPSNKVFAQGVVATVANGLTVAVAGTLLLIAYARTQTKSGSLKKD.

5 consecutive transmembrane segments (helical) span residues 14-34 (VVATGIGAALFVVIGMVSIPT), 50-70 (LFGVVFGPIVGFLTGFIGHAL), 77-97 (GNPWWTWVLASGLFGLVVGLL), 119-139 (AQFVANALVWVVIAPLGDILI), and 152-172 (VVATVANGLTVAVAGTLLLIA).

Belongs to the UPF0397 family.

It is found in the cell membrane. The protein is UPF0397 protein SGO_0469 of Streptococcus gordonii (strain Challis / ATCC 35105 / BCRC 15272 / CH1 / DL1 / V288).